Consider the following 364-residue polypeptide: Histidinol-phosphate aminotransferase (364 aa).

K226 carries the post-translational modification N6-(pyridoxal phosphate)lysine.

Belongs to the class-II pyridoxal-phosphate-dependent aminotransferase family. Histidinol-phosphate aminotransferase subfamily. Homodimer. The cofactor is pyridoxal 5'-phosphate.

The enzyme catalyses L-histidinol phosphate + 2-oxoglutarate = 3-(imidazol-4-yl)-2-oxopropyl phosphate + L-glutamate. Its pathway is amino-acid biosynthesis; L-histidine biosynthesis; L-histidine from 5-phospho-alpha-D-ribose 1-diphosphate: step 7/9. The protein is Histidinol-phosphate aminotransferase of Campylobacter jejuni subsp. jejuni serotype O:23/36 (strain 81-176).